Consider the following 359-residue polypeptide: Patr class I histocompatibility antigen, B-1 alpha chain (359 aa).

An N-terminal signal peptide occupies residues Ala-1–Ala-20. The segment at Gly-21–Ala-110 is alpha-1. The Extracellular segment spans residues Gly-21–Val-305. The N-linked (GlcNAc...) asparagine glycan is linked to Asn-106. The tract at residues Gly-111–Ala-202 is alpha-2. 2 disulfide bridges follow: Cys-121/Cys-184 and Cys-223/Cys-279. The segment at Asp-203–Trp-294 is alpha-3. The 87-residue stretch at Pro-205–Thr-291 folds into the Ig-like C1-type domain. The segment at Glu-295 to Val-305 is connecting peptide. A helical transmembrane segment spans residues Gly-306–Cys-329. Topologically, residues Arg-330–Ala-359 are cytoplasmic. Positions Lys-332–Ala-359 are disordered. The span at Ser-340 to Ala-359 shows a compositional bias: low complexity. A phosphoserine mark is found at Ser-353 and Ser-356.

The protein belongs to the MHC class I family. In terms of assembly, heterodimer of an alpha chain and a beta chain (beta-2-microglobulin).

The protein localises to the membrane. Functionally, involved in the presentation of foreign antigens to the immune system. The polypeptide is Patr class I histocompatibility antigen, B-1 alpha chain (Pan troglodytes (Chimpanzee)).